The chain runs to 414 residues: Sec-independent protein translocase protein TatC (414 aa).

Residues 1–21 (MTQSTSVSKGGRVSRKAKKNP) form a disordered region. A run of 6 helical transmembrane segments spans residues 45–65 (IAVT…AWAI), 119–139 (GGLA…WRFI), 157–177 (IAGF…PMGL), 200–220 (FVIA…FTAM), 238–258 (IMIV…DPIS), and 259–279 (MLVL…FTRI). The disordered stretch occupies residues 315–414 (IYDGDHKGIA…IQSSSFDDVL (100 aa)). Residues 323–336 (IAGGGDAHPAGGSG) are compositionally biased toward gly residues. Residues 345-357 (TAPTRAPSASESP) are compositionally biased toward low complexity. Over residues 403 to 414 (DTIQSSSFDDVL) the composition is skewed to polar residues.

Belongs to the TatC family. The Tat system comprises two distinct complexes: a TatABC complex, containing multiple copies of TatA, TatB and TatC subunits, and a separate TatA complex, containing only TatA subunits. Substrates initially bind to the TatABC complex, which probably triggers association of the separate TatA complex to form the active translocon.

The protein localises to the cell membrane. Its function is as follows. Part of the twin-arginine translocation (Tat) system that transports large folded proteins containing a characteristic twin-arginine motif in their signal peptide across membranes. Together with TatB, TatC is part of a receptor directly interacting with Tat signal peptides. The chain is Sec-independent protein translocase protein TatC from Corynebacterium kroppenstedtii (strain DSM 44385 / JCM 11950 / CIP 105744 / CCUG 35717).